Here is a 191-residue protein sequence, read N- to C-terminus: Protein phosphatase inhibitor 2 (191 aa).

Over residues 20–31 (ESNKPVRQKITE) the composition is skewed to basic and acidic residues. Disordered stretches follow at residues 20 to 52 (ESNK…RGRA) and 67 to 191 (RNVL…PELI). Phosphoserine occurs at positions 45 and 47. A compositionally biased stretch (acidic residues) spans 93 to 109 (SDEEEEEADPMDQDEEG). A compositionally biased stretch (basic and acidic residues) spans 114–136 (KNERFNAHRKAHYDEFRKVKELR).

Interacts with protein phosphatase 1. Interacts with TOPP1, SRK2D/SNRK2.2, SRK2I/SNRK2.3, SRK2E/SNRK2.6, SRK2C/SNRK2.8 and PYL11. Post-translationally, phosphorylated in vivo. As to expression, expressed in roots, cotyledons, leaves, flowers and siliques.

The protein localises to the nucleus. It is found in the cytoplasm. Functionally, inhibitor of protein-phosphatase 1 (PP1). Binds to and inhibits PP1 activity. Acts as negative regulator of abscisic acid (ABA) signaling. Enhances the inhibition of SRK2E/SNRK2.6 by TOPP1. May promote the interaction between TOPP1 and the ABA receptor PYL11. In Arabidopsis thaliana (Mouse-ear cress), this protein is Protein phosphatase inhibitor 2.